The primary structure comprises 150 residues: Auxin-binding protein 5 (150 aa).

A signal peptide spans 1–41 (MVRRRPATGAAQRPQLAAVGRGLLLASVLAAAASSLPVAES). Positions 98, 100, and 104 each coordinate Zn(2+). N-linked (GlcNAc...) asparagine glycosylation occurs at Asn-136. A Zn(2+)-binding site is contributed by His-147.

As to quaternary structure, homodimer.

It is found in the endoplasmic reticulum lumen. In terms of biological role, this is probably a receptor for the plant hormone auxin. The protein is Auxin-binding protein 5 (ABP5) of Zea mays (Maize).